Here is a 387-residue protein sequence, read N- to C-terminus: Carbamoyl phosphate synthase small chain (387 aa).

The tract at residues 1–189 is CPSase; that stretch reads MIKSAILVLE…GLPEDKQEQD (189 aa). Residues S47, G241, and G243 each coordinate L-glutamine. A Glutamine amidotransferase type-1 domain is found at 193 to 380; that stretch reads HVVAYDFGAK…IELIEQYCQK (188 aa). The Nucleophile role is filled by C269. L-glutamine is bound by residues L270, Q273, N311, G313, and F314. Active-site residues include H353 and E355.

The protein belongs to the CarA family. As to quaternary structure, composed of two chains; the small (or glutamine) chain promotes the hydrolysis of glutamine to ammonia, which is used by the large (or ammonia) chain to synthesize carbamoyl phosphate. Tetramer of heterodimers (alpha,beta)4.

The enzyme catalyses hydrogencarbonate + L-glutamine + 2 ATP + H2O = carbamoyl phosphate + L-glutamate + 2 ADP + phosphate + 2 H(+). It carries out the reaction L-glutamine + H2O = L-glutamate + NH4(+). The protein operates within amino-acid biosynthesis; L-arginine biosynthesis; carbamoyl phosphate from bicarbonate: step 1/1. Its pathway is pyrimidine metabolism; UMP biosynthesis via de novo pathway; (S)-dihydroorotate from bicarbonate: step 1/3. Its function is as follows. Small subunit of the glutamine-dependent carbamoyl phosphate synthetase (CPSase). CPSase catalyzes the formation of carbamoyl phosphate from the ammonia moiety of glutamine, carbonate, and phosphate donated by ATP, constituting the first step of 2 biosynthetic pathways, one leading to arginine and/or urea and the other to pyrimidine nucleotides. The small subunit (glutamine amidotransferase) binds and cleaves glutamine to supply the large subunit with the substrate ammonia. This is Carbamoyl phosphate synthase small chain from Photorhabdus laumondii subsp. laumondii (strain DSM 15139 / CIP 105565 / TT01) (Photorhabdus luminescens subsp. laumondii).